Here is a 316-residue protein sequence, read N- to C-terminus: Ribosomal RNA small subunit methyltransferase H (316 aa).

Residues 35–37 (SGH), D55, F84, D105, and Q112 each bind S-adenosyl-L-methionine.

The protein belongs to the methyltransferase superfamily. RsmH family.

It localises to the cytoplasm. The enzyme catalyses cytidine(1402) in 16S rRNA + S-adenosyl-L-methionine = N(4)-methylcytidine(1402) in 16S rRNA + S-adenosyl-L-homocysteine + H(+). Its function is as follows. Specifically methylates the N4 position of cytidine in position 1402 (C1402) of 16S rRNA. This is Ribosomal RNA small subunit methyltransferase H from Streptococcus pyogenes serotype M4 (strain MGAS10750).